A 166-amino-acid polypeptide reads, in one-letter code: Telethonin (166 aa).

Ser-39 carries the phosphoserine modification. A disordered region spans residues 145 to 166 (VSKPGTLRRSLSRSMSQEAQRG). Over residues 156–166 (SRSMSQEAQRG) the composition is skewed to polar residues.

As to quaternary structure, interacts with MYOZ1, MYOZ2 and MYOZ3. Interacts with CSRP3. Interacts directly with the N-terminal Ig-like domains of 2 titin (TTN) molecules. Interacts with ANKRD2; the interaction is direct.

The protein localises to the cytoplasm. The protein resides in the myofibril. It localises to the sarcomere. Its function is as follows. Muscle assembly regulating factor. Mediates the antiparallel assembly of titin (TTN) molecules at the sarcomeric Z-disk. This is Telethonin (TCAP) from Bos taurus (Bovine).